Reading from the N-terminus, the 148-residue chain is Ribonuclease pancreatic (148 aa).

The N-terminal stretch at 1 to 25 (MGLEKSLILFPLLVLVVGWVQPSLG) is a signal peptide. Substrate is bound by residues Lys32, Arg35, 65–69 (KPVNT), Lys90, and Arg109. Cystine bridges form between Cys50-Cys108, Cys64-Cys119, Cys82-Cys134, and Cys89-Cys96. His143 (proton donor) is an active-site residue.

This sequence belongs to the pancreatic ribonuclease family. As to quaternary structure, monomer. Interacts with and forms tight 1:1 complexes with RNH1. Dimerization of two such complexes may occur. Interaction with RNH1 inhibits this protein. In terms of tissue distribution, pancreas.

It is found in the secreted. It carries out the reaction an [RNA] containing cytidine + H2O = an [RNA]-3'-cytidine-3'-phosphate + a 5'-hydroxy-ribonucleotide-3'-[RNA].. It catalyses the reaction an [RNA] containing uridine + H2O = an [RNA]-3'-uridine-3'-phosphate + a 5'-hydroxy-ribonucleotide-3'-[RNA].. Endonuclease that catalyzes the cleavage of RNA on the 3' side of pyrimidine nucleotides. Acts on single-stranded and double-stranded RNA. This is Ribonuclease pancreatic (RNASE1) from Peromyscus leucopus (White-footed mouse).